A 398-amino-acid polypeptide reads, in one-letter code: 1-deoxy-D-xylulose 5-phosphate reductoisomerase (398 aa).

NADPH contacts are provided by T10, G11, S12, V13, G36, R37, N38, and N124. K125 is a binding site for 1-deoxy-D-xylulose 5-phosphate. An NADPH-binding site is contributed by E126. Residue D150 coordinates Mn(2+). Residues S151, E152, S186, and H209 each contribute to the 1-deoxy-D-xylulose 5-phosphate site. E152 contacts Mn(2+). Residue G215 participates in NADPH binding. Residues S222, N227, K228, and E231 each contribute to the 1-deoxy-D-xylulose 5-phosphate site. A Mn(2+)-binding site is contributed by E231.

It belongs to the DXR family. As to quaternary structure, homodimer. Mg(2+) is required as a cofactor. The cofactor is Mn(2+).

It catalyses the reaction 2-C-methyl-D-erythritol 4-phosphate + NADP(+) = 1-deoxy-D-xylulose 5-phosphate + NADPH + H(+). It participates in isoprenoid biosynthesis; isopentenyl diphosphate biosynthesis via DXP pathway; isopentenyl diphosphate from 1-deoxy-D-xylulose 5-phosphate: step 1/6. Functionally, catalyzes the NADPH-dependent rearrangement and reduction of 1-deoxy-D-xylulose-5-phosphate (DXP) to 2-C-methyl-D-erythritol 4-phosphate (MEP). The protein is 1-deoxy-D-xylulose 5-phosphate reductoisomerase of Serratia proteamaculans (strain 568).